The sequence spans 369 residues: NAD(P)H-quinone oxidoreductase subunit 1, chloroplastic (369 aa).

Helical transmembrane passes span Phe25 to Ile45, Val104 to Ile124, Ile130 to Gly150, Leu270 to Pro290, and Val306 to Ile326.

It belongs to the complex I subunit 1 family. NDH is composed of at least 16 different subunits, 5 of which are encoded in the nucleus.

It is found in the plastid. Its subcellular location is the chloroplast thylakoid membrane. The catalysed reaction is a plastoquinone + NADH + (n+1) H(+)(in) = a plastoquinol + NAD(+) + n H(+)(out). The enzyme catalyses a plastoquinone + NADPH + (n+1) H(+)(in) = a plastoquinol + NADP(+) + n H(+)(out). In terms of biological role, NDH shuttles electrons from NAD(P)H:plastoquinone, via FMN and iron-sulfur (Fe-S) centers, to quinones in the photosynthetic chain and possibly in a chloroplast respiratory chain. The immediate electron acceptor for the enzyme in this species is believed to be plastoquinone. Couples the redox reaction to proton translocation, and thus conserves the redox energy in a proton gradient. In Huperzia lucidula (Shining clubmoss), this protein is NAD(P)H-quinone oxidoreductase subunit 1, chloroplastic.